The chain runs to 120 residues: MIPGEYVLSDTPILCNRGREAIEIEVINTGDRPVQIGSHYHFAEVNPLVTFDRVRARGMRLDIPAGTAARLEPGDATTVRLIPFAGGRLIRGFRNEINGAVESCMVSGASEPASGTGETS.

The protein belongs to the urease beta subunit family. Heterotrimer of UreA (gamma), UreB (beta) and UreC (alpha) subunits. Three heterotrimers associate to form the active enzyme.

Its subcellular location is the cytoplasm. It carries out the reaction urea + 2 H2O + H(+) = hydrogencarbonate + 2 NH4(+). It functions in the pathway nitrogen metabolism; urea degradation; CO(2) and NH(3) from urea (urease route): step 1/1. In Corynebacterium efficiens (strain DSM 44549 / YS-314 / AJ 12310 / JCM 11189 / NBRC 100395), this protein is Urease subunit beta.